The primary structure comprises 143 residues: Cold shock domain-containing protein CG9705 (143 aa).

The segment at 1 to 30 is disordered; that stretch reads MTEPRTPEKLLAAKPPVLHHNSHSPNASLQ. 4 positions are modified to phosphoserine: S22, S24, S28, and S33. The region spanning 54–121 is the CSD domain; that stretch reads VVTGMVKSFS…KHQAVHVQIS (68 aa). Phosphoserine is present on residues S139 and S140.

The chain is Cold shock domain-containing protein CG9705 from Drosophila melanogaster (Fruit fly).